Consider the following 187-residue polypeptide: Elongation factor P 1 (187 aa).

This sequence belongs to the elongation factor P family.

It is found in the cytoplasm. Its pathway is protein biosynthesis; polypeptide chain elongation. Functionally, involved in peptide bond synthesis. Stimulates efficient translation and peptide-bond synthesis on native or reconstituted 70S ribosomes in vitro. Probably functions indirectly by altering the affinity of the ribosome for aminoacyl-tRNA, thus increasing their reactivity as acceptors for peptidyl transferase. The protein is Elongation factor P 1 of Geobacter sulfurreducens (strain ATCC 51573 / DSM 12127 / PCA).